The primary structure comprises 224 residues: Protein DEHYDRATION-INDUCED 19 homolog 4 (224 aa).

The segment covering 1 to 12 (MDSNWINCPSVF) has biased composition (polar residues). The disordered stretch occupies residues 1–23 (MDSNWINCPSVFSSSSSSSRRCQ). A compositionally biased stretch (low complexity) spans 13–23 (SSSSSSSRRCQ). Residue T117 is modified to Phosphothreonine.

The protein belongs to the Di19 family. Post-translationally, phosphorylated in vitro by CPK3 or CPK11. As to expression, expressed in seedlings, roots, leaves, stems, flowers and siliques.

Its subcellular location is the cytoplasm. It localises to the perinuclear region. The polypeptide is Protein DEHYDRATION-INDUCED 19 homolog 4 (DI19-4) (Arabidopsis thaliana (Mouse-ear cress)).